We begin with the raw amino-acid sequence, 265 residues long: Enolase-phosphatase E1 (265 aa).

Mg(2+) is bound by residues D18 and E20. Substrate is bound by residues S144–S145 and K188. D215 contributes to the Mg(2+) binding site.

The protein belongs to the HAD-like hydrolase superfamily. MasA/MtnC family. As to quaternary structure, monomer. Requires Mg(2+) as cofactor.

The protein localises to the cytoplasm. The protein resides in the nucleus. It catalyses the reaction 5-methylsulfanyl-2,3-dioxopentyl phosphate + H2O = 1,2-dihydroxy-5-(methylsulfanyl)pent-1-en-3-one + phosphate. The protein operates within amino-acid biosynthesis; L-methionine biosynthesis via salvage pathway; L-methionine from S-methyl-5-thio-alpha-D-ribose 1-phosphate: step 3/6. Its pathway is amino-acid biosynthesis; L-methionine biosynthesis via salvage pathway; L-methionine from S-methyl-5-thio-alpha-D-ribose 1-phosphate: step 4/6. Functionally, bifunctional enzyme that catalyzes the enolization of 2,3-diketo-5-methylthiopentyl-1-phosphate (DK-MTP-1-P) into the intermediate 2-hydroxy-3-keto-5-methylthiopentenyl-1-phosphate (HK-MTPenyl-1-P), which is then dephosphorylated to form the acireductone 1,2-dihydroxy-3-keto-5-methylthiopentene (DHK-MTPene). The polypeptide is Enolase-phosphatase E1 (Candida albicans (strain SC5314 / ATCC MYA-2876) (Yeast)).